We begin with the raw amino-acid sequence, 120 residues long: ATP synthase subunit a (120 aa).

The next 4 helical transmembrane spans lie at 2-22, 29-49, 59-79, and 94-116; these read FFYS…YSYL, FFPF…VGIV, LNIT…LGFY, and IPFV…RSVG.

Belongs to the ATPase A chain family. In terms of assembly, F-type ATPases have 2 components, CF(1) - the catalytic core - and CF(0) - the membrane proton channel. CF(1) has five subunits: alpha(3), beta(3), gamma(1), delta(1), epsilon(1). CF(0) has three main subunits: a, b and c.

It localises to the mitochondrion inner membrane. Functionally, mitochondrial membrane ATP synthase (F(1)F(0) ATP synthase or Complex V) produces ATP from ADP in the presence of a proton gradient across the membrane which is generated by electron transport complexes of the respiratory chain. F-type ATPases consist of two structural domains, F(1) - containing the extramembraneous catalytic core and F(0) - containing the membrane proton channel, linked together by a central stalk and a peripheral stalk. During catalysis, ATP synthesis in the catalytic domain of F(1) is coupled via a rotary mechanism of the central stalk subunits to proton translocation. Key component of the proton channel; it may play a direct role in the translocation of protons across the membrane. The polypeptide is ATP synthase subunit a (ATP6) (Naegleria fowleri (Brain eating amoeba)).